We begin with the raw amino-acid sequence, 912 residues long: Transcription factor bHLH140 (912 aa).

The interval 1–57 is disordered; that stretch reads MDDFNLRSENPNSSSTTSSSSSSFHRHKSETGNTKRSRSTSTLSTDPQSVAARDRRH. Over residues 13-23 the composition is skewed to low complexity; sequence SSSTTSSSSSS. Positions 43 to 92 constitute a bHLH domain; that stretch reads LSTDPQSVAARDRRHRISDRFKILQSMVPGGAKMDTVSMLDEAISYVKFL. ATP is bound at residue 234 to 241; the sequence is GPPGSGKS. In terms of domain architecture, Macro spans 511–690; that stretch reads KAKASQKNID…KYKGSQDKAV (180 aa). Residues 657 to 666 show a composition bias toward polar residues; sequence PKRSSQTAVS. Residues 657–706 form a disordered region; that stretch reads PKRSSQTAVSDSGEDIKEDSERNKKYKGSQDKAVTNNLESESLEDTRGSG. Residues 720-829 enclose the HIT domain; sequence LHSIAMHPER…SQDFNSDSLK (110 aa). Residues 870 to 893 form a C2H2-type zinc finger; that stretch reads LRCNRCRSAHPNIPKLKSHVRSCH.

Homodimer.

It localises to the nucleus. This is Transcription factor bHLH140 (BHLH140) from Arabidopsis thaliana (Mouse-ear cress).